A 616-amino-acid polypeptide reads, in one-letter code: Proline--tRNA ligase (616 aa).

It belongs to the class-II aminoacyl-tRNA synthetase family. ProS type 1 subfamily. Homodimer.

Its subcellular location is the cytoplasm. The catalysed reaction is tRNA(Pro) + L-proline + ATP = L-prolyl-tRNA(Pro) + AMP + diphosphate. Catalyzes the attachment of proline to tRNA(Pro) in a two-step reaction: proline is first activated by ATP to form Pro-AMP and then transferred to the acceptor end of tRNA(Pro). As ProRS can inadvertently accommodate and process non-cognate amino acids such as alanine and cysteine, to avoid such errors it has two additional distinct editing activities against alanine. One activity is designated as 'pretransfer' editing and involves the tRNA(Pro)-independent hydrolysis of activated Ala-AMP. The other activity is designated 'posttransfer' editing and involves deacylation of mischarged Ala-tRNA(Pro). The misacylated Cys-tRNA(Pro) is not edited by ProRS. The polypeptide is Proline--tRNA ligase (Streptococcus mutans serotype c (strain ATCC 700610 / UA159)).